The sequence spans 403 residues: D-mannonate dehydratase Caul1427 (403 aa).

Residues Asn38 and His123 each contribute to the substrate site. Catalysis depends on Tyr160, which acts as the Proton donor/acceptor. Residue Asp211 participates in Mg(2+) binding. The active-site Proton donor/acceptor is His213. Glu237 and Glu263 together coordinate Mg(2+). Glu263, Arg284, His313, Asp317, and Glu340 together coordinate substrate.

The protein belongs to the mandelate racemase/muconate lactonizing enzyme family. GalD subfamily. Mg(2+) serves as cofactor.

It carries out the reaction D-mannonate = 2-dehydro-3-deoxy-D-gluconate + H2O. The protein operates within carbohydrate metabolism; pentose and glucuronate interconversion. Functionally, catalyzes the dehydration of D-mannonate. Has no detectable activity with a panel of 70 other acid sugars (in vitro). In Caulobacter sp. (strain K31), this protein is D-mannonate dehydratase Caul1427.